Reading from the N-terminus, the 254-residue chain is Zinc import ATP-binding protein ZnuC (254 aa).

An ABC transporter domain is found at 5–221 (ICAADLSVSH…PAYRALFGSE (217 aa)). An ATP-binding site is contributed by 38–45 (GPNGSGKS). Residues 234-245 (DHDHDHVAEGHR) are compositionally biased toward basic and acidic residues. Residues 234–254 (DHDHDHVAEGHRHGPACAHPH) form a disordered region.

This sequence belongs to the ABC transporter superfamily. Zinc importer (TC 3.A.1.15.5) family. The complex is composed of two ATP-binding proteins (ZnuC), two transmembrane proteins (ZnuB) and a solute-binding protein (ZnuA).

The protein localises to the cell inner membrane. It carries out the reaction Zn(2+)(out) + ATP(in) + H2O(in) = Zn(2+)(in) + ADP(in) + phosphate(in) + H(+)(in). Its function is as follows. Part of the ABC transporter complex ZnuABC involved in zinc import. Responsible for energy coupling to the transport system. This Paracoccus denitrificans (strain Pd 1222) protein is Zinc import ATP-binding protein ZnuC.